The primary structure comprises 283 residues: uncharacterized protein (283 aa).

3 helical membrane-spanning segments follow: residues 18-38 (VYDIIVVIVVMALATIIAKLI), 61-81 (VIYFGIIIVAFIAVLPALGLD), and 94-114 (IVLGFASQSVVANLVSGIFLI).

It belongs to the MscS (TC 1.A.23) family.

The protein resides in the cell membrane. This is an uncharacterized protein from Archaeoglobus fulgidus (strain ATCC 49558 / DSM 4304 / JCM 9628 / NBRC 100126 / VC-16).